A 222-amino-acid chain; its full sequence is uncharacterized protein (222 aa).

The 70-residue stretch at 8–77 (AKKGQIIYRY…GNAGYFVAKN (70 aa)) folds into the HTH gntR-type domain.

This is an uncharacterized protein from Mycoplasma pneumoniae (strain ATCC 29342 / M129 / Subtype 1) (Mycoplasmoides pneumoniae).